The primary structure comprises 161 residues: MSMDTANNDQGTDLGKVIDISRIIQMIPHRYPFLMVDRVVQVVANESAVGIKNVTINEPFFQGHFPSRPVFPGVLIIESMAQTAAVLVVETLGESAEGKLVYFMSVENCRFRKPVGPGDQLMIHVFKERSRGNVWKFRGEAKVDGVLVAEATYAAMILDEK.

His-64 is a catalytic residue.

Belongs to the thioester dehydratase family. FabZ subfamily.

It is found in the cytoplasm. It catalyses the reaction a (3R)-hydroxyacyl-[ACP] = a (2E)-enoyl-[ACP] + H2O. Functionally, involved in unsaturated fatty acids biosynthesis. Catalyzes the dehydration of short chain beta-hydroxyacyl-ACPs and long chain saturated and unsaturated beta-hydroxyacyl-ACPs. The polypeptide is 3-hydroxyacyl-[acyl-carrier-protein] dehydratase FabZ (Paramagnetospirillum magneticum (strain ATCC 700264 / AMB-1) (Magnetospirillum magneticum)).